A 505-amino-acid chain; its full sequence is MSAEEMVQIRLEDRCYPVSKRKLIEQSDYFRALYRSGMREALSQEAGGPEVQQLRGLSAPGLRLVLDFINAGGAREGWLLGPRGEKGGGVDEDEEMDEVSLLSELVEAASFLQVTSLLQLLLSQVRLNNCLEMYRLAQVYGLPDLQEACLRFMVVHFHEVLCKPQFHLLGSPPQAPGDVSLKQRLREARMTGTPVLVALGDFLGGPLAPHPYQGEPPSMLRYEEMTERWFPLANNLPPDLVNVRGYGSAILDNYLFIVGGYRITSQEISAAHSYNPSTNEWLQVASMNQKRSNFKLVAVNSKLYAIGGQAVSNVECYNPEQDAWNFVAPLPNPLAEFSACECKGKIYVIGGYTTRDRNMNILQYCPSSDMWTLFETCDVHIRKQQMVSVEETIYIVGGCLHELGPNRRSSQSEDMLTVQSYNTVTRQWLYLKENTSKSGLNLTCALHNDGIYIMSRDVTLSTSLEHRVFLKYNIFSDSWEAFRRFPAFGHNLLVSSLYLPNKAET.

Residues E5–W78 enclose the BTB domain. Position 43 is a phosphoserine (S43). 6 Kelch repeats span residues P176 to N234, N235 to L282, V284 to N325, V327 to T372, F374 to L429, and L431 to E480.

As to quaternary structure, component of the BCR(KLHL42) E3 ubiquitin ligase complex, at least composed of CUL3 and KLHL42. Interacts (via the BTB domain) with CUL3. Interacts (via the kelch domains) with KATNA1.

The protein localises to the cytoplasm. Its subcellular location is the cytoskeleton. It localises to the spindle. The protein operates within protein modification; protein ubiquitination. In terms of biological role, substrate-specific adapter of a BCR (BTB-CUL3-RBX1) E3 ubiquitin-protein ligase complex required for mitotic progression and cytokinesis. The BCR(KLHL42) E3 ubiquitin ligase complex mediates the ubiquitination and subsequent degradation of KATNA1. Involved in microtubule dynamics throughout mitosis. This Homo sapiens (Human) protein is Kelch-like protein 42 (KLHL42).